Consider the following 507-residue polypeptide: Ribosomal protein uS12 methylthiotransferase RimO (507 aa).

In terms of domain architecture, MTTase N-terminal spans 13-124; that stretch reads RRVALLTLGC…ISDRLGAVLA (112 aa). Residues Cys-22, Cys-58, Cys-87, Cys-205, Cys-209, and Cys-212 each coordinate [4Fe-4S] cluster. Residues 191-422 form the Radical SAM core domain; it reads LDTGPVASLK…ALADELCAQR (232 aa). Positions 424–497 constitute a TRAM domain; the sequence is EQRLGSTVQV…GVDLVAVPDA (74 aa).

This sequence belongs to the methylthiotransferase family. RimO subfamily. It depends on [4Fe-4S] cluster as a cofactor.

Its subcellular location is the cytoplasm. It catalyses the reaction L-aspartate(89)-[ribosomal protein uS12]-hydrogen + (sulfur carrier)-SH + AH2 + 2 S-adenosyl-L-methionine = 3-methylsulfanyl-L-aspartate(89)-[ribosomal protein uS12]-hydrogen + (sulfur carrier)-H + 5'-deoxyadenosine + L-methionine + A + S-adenosyl-L-homocysteine + 2 H(+). Catalyzes the methylthiolation of an aspartic acid residue of ribosomal protein uS12. This is Ribosomal protein uS12 methylthiotransferase RimO from Salinispora tropica (strain ATCC BAA-916 / DSM 44818 / JCM 13857 / NBRC 105044 / CNB-440).